The primary structure comprises 485 residues: NADH-quinone oxidoreductase subunit N (485 aa).

14 helical membrane-spanning segments follow: residues 8–28, 35–55, 75–95, 105–125, 127–147, 159–179, 203–223, 235–255, 271–291, 297–317, 326–346, 374–394, 407–426, and 449–469; these read LIAL…MLCI, FVNA…LYFV, FYTG…YPWL, FYLL…ANHL, SLFI…GYAF, YMLL…LIYA, LLAG…LVPF, PAPV…GAVM, IVLG…AVSQ, LLGY…IAVQ, VGVY…VVSL, AVMT…GFFG, LWWL…YYYL, and ALTA…FFGL.

It belongs to the complex I subunit 2 family. As to quaternary structure, NDH-1 is composed of 13 different subunits. Subunits NuoA, H, J, K, L, M, N constitute the membrane sector of the complex.

The protein resides in the cell inner membrane. The enzyme catalyses a quinone + NADH + 5 H(+)(in) = a quinol + NAD(+) + 4 H(+)(out). Functionally, NDH-1 shuttles electrons from NADH, via FMN and iron-sulfur (Fe-S) centers, to quinones in the respiratory chain. The immediate electron acceptor for the enzyme in this species is believed to be ubiquinone. Couples the redox reaction to proton translocation (for every two electrons transferred, four hydrogen ions are translocated across the cytoplasmic membrane), and thus conserves the redox energy in a proton gradient. This Pectobacterium carotovorum subsp. carotovorum (strain PC1) protein is NADH-quinone oxidoreductase subunit N.